Reading from the N-terminus, the 81-residue chain is ATP synthase subunit c, chloroplastic (81 aa).

The next 2 helical transmembrane spans lie at 3–23 (PLIS…ASIG) and 57–77 (LAFM…LLFA).

The protein belongs to the ATPase C chain family. F-type ATPases have 2 components, F(1) - the catalytic core - and F(0) - the membrane proton channel. F(1) has five subunits: alpha(3), beta(3), gamma(1), delta(1), epsilon(1). F(0) has four main subunits: a(1), b(1), b'(1) and c(10-14). The alpha and beta chains form an alternating ring which encloses part of the gamma chain. F(1) is attached to F(0) by a central stalk formed by the gamma and epsilon chains, while a peripheral stalk is formed by the delta, b and b' chains.

Its subcellular location is the plastid. It localises to the chloroplast thylakoid membrane. Functionally, f(1)F(0) ATP synthase produces ATP from ADP in the presence of a proton or sodium gradient. F-type ATPases consist of two structural domains, F(1) containing the extramembraneous catalytic core and F(0) containing the membrane proton channel, linked together by a central stalk and a peripheral stalk. During catalysis, ATP synthesis in the catalytic domain of F(1) is coupled via a rotary mechanism of the central stalk subunits to proton translocation. In terms of biological role, key component of the F(0) channel; it plays a direct role in translocation across the membrane. A homomeric c-ring of between 10-14 subunits forms the central stalk rotor element with the F(1) delta and epsilon subunits. This is ATP synthase subunit c, chloroplastic from Acorus calamus var. americanus (American sweet flag).